A 314-amino-acid polypeptide reads, in one-letter code: 4-hydroxy-3-methylbut-2-enyl diphosphate reductase (314 aa).

Cys-12 contributes to the [4Fe-4S] cluster binding site. (2E)-4-hydroxy-3-methylbut-2-enyl diphosphate-binding residues include His-41 and His-74. Positions 41 and 74 each coordinate dimethylallyl diphosphate. Isopentenyl diphosphate is bound by residues His-41 and His-74. Cys-96 contacts [4Fe-4S] cluster. Position 124 (His-124) interacts with (2E)-4-hydroxy-3-methylbut-2-enyl diphosphate. His-124 contacts dimethylallyl diphosphate. Residue His-124 participates in isopentenyl diphosphate binding. Glu-126 serves as the catalytic Proton donor. A (2E)-4-hydroxy-3-methylbut-2-enyl diphosphate-binding site is contributed by Thr-167. Position 197 (Cys-197) interacts with [4Fe-4S] cluster. Residues Ser-225, Ser-226, Asn-227, and Ser-269 each contribute to the (2E)-4-hydroxy-3-methylbut-2-enyl diphosphate site. Dimethylallyl diphosphate is bound by residues Ser-225, Ser-226, Asn-227, and Ser-269. Ser-225, Ser-226, Asn-227, and Ser-269 together coordinate isopentenyl diphosphate.

Belongs to the IspH family. It depends on [4Fe-4S] cluster as a cofactor.

It catalyses the reaction isopentenyl diphosphate + 2 oxidized [2Fe-2S]-[ferredoxin] + H2O = (2E)-4-hydroxy-3-methylbut-2-enyl diphosphate + 2 reduced [2Fe-2S]-[ferredoxin] + 2 H(+). It carries out the reaction dimethylallyl diphosphate + 2 oxidized [2Fe-2S]-[ferredoxin] + H2O = (2E)-4-hydroxy-3-methylbut-2-enyl diphosphate + 2 reduced [2Fe-2S]-[ferredoxin] + 2 H(+). Its pathway is isoprenoid biosynthesis; dimethylallyl diphosphate biosynthesis; dimethylallyl diphosphate from (2E)-4-hydroxy-3-methylbutenyl diphosphate: step 1/1. The protein operates within isoprenoid biosynthesis; isopentenyl diphosphate biosynthesis via DXP pathway; isopentenyl diphosphate from 1-deoxy-D-xylulose 5-phosphate: step 6/6. Its function is as follows. Catalyzes the conversion of 1-hydroxy-2-methyl-2-(E)-butenyl 4-diphosphate (HMBPP) into a mixture of isopentenyl diphosphate (IPP) and dimethylallyl diphosphate (DMAPP). Acts in the terminal step of the DOXP/MEP pathway for isoprenoid precursor biosynthesis. This chain is 4-hydroxy-3-methylbut-2-enyl diphosphate reductase, found in Actinobacillus pleuropneumoniae serotype 5b (strain L20).